The following is a 765-amino-acid chain: Cyanobacterial phytochrome A (765 aa).

The segment at 20-510 (IHLSGQIQPH…RKAIVNIVLR (491 aa)) is chromophore binding domain. Positions 152–320 (NLRDFCQIIV…VIFAEISARE (169 aa)) constitute a GAF domain. Cys259 contributes to the a tetrapyrrole binding site. The region spanning 535–748 (VASHDLQEPL…TFYFTIPVGG (214 aa)) is the Histidine kinase domain. A Phosphohistidine; by autocatalysis modification is found at His538.

This sequence in the N-terminal section; belongs to the phytochrome family. Post-translationally, contains one covalently linked tetrapyrrole chromophore.

The catalysed reaction is ATP + protein L-histidine = ADP + protein N-phospho-L-histidine.. In terms of biological role, photoreceptor which exists in two forms that are reversibly interconvertible by light: the R form that absorbs maximally in the red region of the spectrum and the FR form that absorbs maximally in the far-red region. The polypeptide is Cyanobacterial phytochrome A (aphA) (Nostoc sp. (strain PCC 7120 / SAG 25.82 / UTEX 2576)).